Reading from the N-terminus, the 494-residue chain is DEAD-box ATP-dependent RNA helicase 20 (494 aa).

Residues 1 to 20 (MSRFDGRAADPGSYRDRRSE) show a composition bias toward basic and acidic residues. The tract at residues 1–39 (MSRFDGRAADPGSYRDRRSEGAFGGGTRAFAPTSKADSA) is disordered. The span at 29–39 (AFAPTSKADSA) shows a compositional bias: low complexity. The Q motif motif lies at 91–119 (REFRDVGFPEYVLQEITKAGFVEPTPIQS). In terms of domain architecture, Helicase ATP-binding spans 122-297 (WPMALRGRDL…RNFLFDPYKV (176 aa)). ATP is bound at residue 135-142 (AETGSGKT). A DEAD box motif is present at residues 245 to 248 (DEAD). The Helicase C-terminal domain maps to 325-470 (KLVNLLEDIM…KVSPELANMG (146 aa)). The disordered stretch occupies residues 465–494 (ELANMGRGAPPPSSGHRDRYRGYGGGRSWS).

It belongs to the DEAD box helicase family. DDX5/DBP2 subfamily.

It localises to the nucleus. It catalyses the reaction ATP + H2O = ADP + phosphate + H(+). In terms of biological role, ATP-dependent RNA helicase involved nonsense-mediated mRNA decay and ribosome biogenesis through rRNA processing. The sequence is that of DEAD-box ATP-dependent RNA helicase 20 from Oryza sativa subsp. japonica (Rice).